Consider the following 160-residue polypeptide: Cyanate hydratase (160 aa).

Residues Arg100, Glu103, and Ser126 contribute to the active site.

Belongs to the cyanase family.

The catalysed reaction is cyanate + hydrogencarbonate + 3 H(+) = NH4(+) + 2 CO2. Functionally, catalyzes the reaction of cyanate with bicarbonate to produce ammonia and carbon dioxide. This Aspergillus niger (strain ATCC MYA-4892 / CBS 513.88 / FGSC A1513) protein is Cyanate hydratase.